The chain runs to 407 residues: BMP-like protein unc-129 (407 aa).

The signal sequence occupies residues 1–18 (MRRLPIVLLLSVFSIANC). N-linked (GlcNAc...) asparagine glycans are attached at residues Asn-27, Asn-42, and Asn-211. The interval 252-283 (DDREPIKRKNGKKNSLSEEISSEDVWQGFGEE) is disordered. The N-linked (GlcNAc...) asparagine glycan is linked to Asn-395.

Belongs to the TGF-beta family. Interacts with netrin receptor unc-5; the interaction is direct.

It is found in the secreted. It localises to the extracellular space. In terms of biological role, required for the migration of axonal growth-cones and distal tip cells (DTC) along the dorsal-ventral axis of the body wall. Acts cell nonautonomously and independently of the classical daf-4, sma-6 or daf-1 TGFbeta receptor signaling. During axon migration, facilitates long-range repulsive guidance of unc-6/netrin by enhancing unc-5-unc-40 signaling at the expense of unc-5 alone signaling, probably through direct interaction with receptor unc-5. Involved in cell-cell contact formation in sensory rays in the developing male tail, via a pathway involving plx-2 and mab-20/semaphorin-2A. The sequence is that of BMP-like protein unc-129 from Caenorhabditis elegans.